Reading from the N-terminus, the 547-residue chain is ATP synthase subunit alpha (547 aa).

An ATP-binding site is contributed by 172 to 179 (GDRKTGKT).

Belongs to the ATPase alpha/beta chains family. In terms of assembly, F-type ATPases have 2 components, CF(1) - the catalytic core - and CF(0) - the membrane proton channel. CF(1) has five subunits: alpha(3), beta(3), gamma(1), delta(1), epsilon(1). CF(0) has three main subunits: a(1), b(2) and c(9-12). The alpha and beta chains form an alternating ring which encloses part of the gamma chain. CF(1) is attached to CF(0) by a central stalk formed by the gamma and epsilon chains, while a peripheral stalk is formed by the delta and b chains.

Its subcellular location is the cell membrane. It carries out the reaction ATP + H2O + 4 H(+)(in) = ADP + phosphate + 5 H(+)(out). In terms of biological role, produces ATP from ADP in the presence of a proton gradient across the membrane. The alpha chain is a regulatory subunit. This is ATP synthase subunit alpha from Rhodococcus erythropolis (strain PR4 / NBRC 100887).